A 158-amino-acid chain; its full sequence is Endoribonuclease YbeY (158 aa).

Zn(2+) contacts are provided by histidine 118, histidine 122, and histidine 128.

It belongs to the endoribonuclease YbeY family. It depends on Zn(2+) as a cofactor.

The protein resides in the cytoplasm. In terms of biological role, single strand-specific metallo-endoribonuclease involved in late-stage 70S ribosome quality control and in maturation of the 3' terminus of the 16S rRNA. This is Endoribonuclease YbeY from Bartonella bacilliformis (strain ATCC 35685 / KC583 / Herrer 020/F12,63).